Here is a 169-residue protein sequence, read N- to C-terminus: Peptide methionine sulfoxide reductase MsrA (169 aa).

Residue cysteine 10 is part of the active site.

It belongs to the MsrA Met sulfoxide reductase family.

It carries out the reaction L-methionyl-[protein] + [thioredoxin]-disulfide + H2O = L-methionyl-(S)-S-oxide-[protein] + [thioredoxin]-dithiol. The catalysed reaction is [thioredoxin]-disulfide + L-methionine + H2O = L-methionine (S)-S-oxide + [thioredoxin]-dithiol. Functionally, has an important function as a repair enzyme for proteins that have been inactivated by oxidation. Catalyzes the reversible oxidation-reduction of methionine sulfoxide in proteins to methionine. In Streptococcus equi subsp. zooepidemicus (strain H70), this protein is Peptide methionine sulfoxide reductase MsrA.